Here is a 116-residue protein sequence, read N- to C-terminus: uncharacterized protein (116 aa).

The N-terminal stretch at 1–19 (MRWDVIILYAISRPYATRR) is a signal peptide. The interval 18–50 (RRTGSHTHPRDSRYIAANQRRPPSACRVGPSPA) is disordered.

This is an uncharacterized protein from Saccharomyces cerevisiae (strain ATCC 204508 / S288c) (Baker's yeast).